The chain runs to 218 residues: Hypoxanthine-guanine phosphoribosyltransferase (218 aa).

Ala-2 bears the N-acetylalanine mark. Position 69 (Lys-69) interacts with GMP. The residue at position 103 (Lys-103) is an N6-acetyllysine. A Glycyl lysine isopeptide (Lys-Gly) (interchain with G-Cter in SUMO1); alternate cross-link involves residue Lys-115. A Glycyl lysine isopeptide (Lys-Gly) (interchain with G-Cter in SUMO2); alternate cross-link involves residue Lys-115. Residues 134–142 (EDIIDTGKT), Lys-166, 186–188 (KFV), and Asp-194 each bind GMP. The active-site Proton acceptor is the Asp-138. Thr-142 is modified (phosphothreonine). Asp-194 contributes to the Mg(2+) binding site.

Belongs to the purine/pyrimidine phosphoribosyltransferase family. Homotetramer. Requires Mg(2+) as cofactor.

It is found in the cytoplasm. The catalysed reaction is IMP + diphosphate = hypoxanthine + 5-phospho-alpha-D-ribose 1-diphosphate. The enzyme catalyses GMP + diphosphate = guanine + 5-phospho-alpha-D-ribose 1-diphosphate. Its pathway is purine metabolism; IMP biosynthesis via salvage pathway; IMP from hypoxanthine: step 1/1. In terms of biological role, converts guanine to guanosine monophosphate, and hypoxanthine to inosine monophosphate. Transfers the 5-phosphoribosyl group from 5-phosphoribosylpyrophosphate onto the purine. Plays a central role in the generation of purine nucleotides through the purine salvage pathway. The sequence is that of Hypoxanthine-guanine phosphoribosyltransferase (HPRT1) from Sus scrofa (Pig).